A 327-amino-acid polypeptide reads, in one-letter code: Interleukin-12 subunit beta (327 aa).

The first 22 residues, 1 to 22, serve as a signal peptide directing secretion; sequence MHPQQLVVSWFSLVLLASPIVA. Residues 23–106 form the Ig-like C2-type domain; the sequence is IWELEKNVYI…LSRSLLLLHK (84 aa). Residues cysteine 50 and cysteine 90 are joined by a disulfide bond. A glycan (N-linked (GlcNAc...) asparagine) is linked at asparagine 223. The Fibronectin type-III domain occupies 238 to 327; the sequence is PPKNLQLKPL…WSEWASVSCS (90 aa).

This sequence belongs to the IL-12B family. In terms of assembly, heterodimer with IL12A; disulfide-linked. The heterodimer is known as interleukin IL-12. Heterodimer with IL23A; disulfide-linked. The heterodimer is known as interleukin IL-23. Also secreted as a monomer. Interacts with NBR1; this interaction promotes IL-12 secretion.

Its function is as follows. Cytokine that can act as a growth factor for activated T and NK cells, enhance the lytic activity of NK/lymphokine-activated killer cells, and stimulate the production of IFN-gamma by resting PBMC. Functionally, associates with IL23A to form the IL-23 interleukin, a heterodimeric cytokine which functions in innate and adaptive immunity. IL-23 may constitute with IL-17 an acute response to infection in peripheral tissues. IL-23 binds to a heterodimeric receptor complex composed of IL12RB1 and IL23R, activates the Jak-Stat signaling cascade, stimulates memory rather than naive T-cells and promotes production of pro-inflammatory cytokines. IL-23 induces autoimmune inflammation and thus may be responsible for autoimmune inflammatory diseases and may be important for tumorigenesis. In Bubalus bubalis (Domestic water buffalo), this protein is Interleukin-12 subunit beta (IL12B).